The primary structure comprises 178 residues: MMNEHSIDTDNRKANNALYLFIIIGLIPLLCIFVVYYKTPDALLLRKIATSTENLPSITSSYNPLMTKVMDIYCKTAPFLALILYILTFKIRKLINNTDRNTVLRSCLLSPLVYAAIVYLFCFRNFELTTAGRPVRLMATNDATLLLFYIGLYSIIFFTTYITLFTPVTAFKLLKKRQ.

Topologically, residues 1–13 are cytoplasmic; the sequence is MMNEHSIDTDNRK. A helical membrane pass occupies residues 14-37; that stretch reads ANNALYLFIIIGLIPLLCIFVVYY. Over 38–68 the chain is Periplasmic; that stretch reads KTPDALLLRKIATSTENLPSITSSYNPLMTK. The helical transmembrane segment at 69–89 threads the bilayer; sequence VMDIYCKTAPFLALILYILTF. Residues 90-105 lie on the Cytoplasmic side of the membrane; it reads KIRKLINNTDRNTVLR. Residues 106–123 form a helical membrane-spanning segment; sequence SCLLSPLVYAAIVYLFCF. Over 124–142 the chain is Periplasmic; sequence RNFELTTAGRPVRLMATND. Residues 143 to 165 traverse the membrane as a helical segment; sequence ATLLLFYIGLYSIIFFTTYITLF. The Cytoplasmic portion of the chain corresponds to 166-178; it reads TPVTAFKLLKKRQ.

Its subcellular location is the cell inner membrane. Its function is as follows. This protein is able to protect a cell, which harbors the plasmid ColA encoding colicin A, against colicin A. The sequence is that of Colicin-A immunity protein (cai) from Citrobacter freundii.